A 527-amino-acid polypeptide reads, in one-letter code: MASREKTSIEGHMFDVVVIGGGISGLSAAKLLAEHEVDVLVLEARDRVGGRTYTVRNEHVDYVDVGGAYVGPTQNRILRLSKELGLETYKVNVNERLVQYVKGKTYPFRGAFPPVWNPIAYLDYNNLWRTMDNMGKEIPADAPWEAPHAEEWDKMTMKDLIDKICWTKTARRFASLFVNINVTSEPHEVSALWFLWYVKQCGGTTRIFSVTNGGQERKFVGGSGQVSERIMERLGDRVKLKRPVTYVDQSDDNIIIETLNHELYECKYVISAIPPTLTAKIHFRPELPSERNQLIQRLPMGAIIKCMMYYKEAFWKKKDYCGCMIIEDEEAPISITLDDTKPDGSLPAIMGFILARKADRLAKLHKEIRKRKICELYAKVLGSQEALQPVHYEEKNWCEEQYSGGCYTAYFPPGIMTHYGRVIRQPFGRIYFAGTETATHWSGYMEGAVEAGERTAREVLNALGRVAEKDLKTQEPESKDVPAMEITHTFWERNLPSVTGLLKLIGFTTSVTALWIVAYKFRLLRRS.

Met-1 bears the N-acetylmethionine mark. Residues Met-1–Ser-497 are Cytoplasmic-facing. Ser-383 bears the Phosphoserine mark. Position 406 is an S-8alpha-FAD cysteine (Cys-406). Residues Val-498 to Ala-518 traverse the membrane as a helical; Anchor for type IV membrane protein segment. The Mitochondrial intermembrane segment spans residues Tyr-519–Ser-527. The tract at residues Lys-520–Arg-522 is interaction with membrane phospholipid headgroups.

This sequence belongs to the flavin monoamine oxidase family. In terms of assembly, monomer, homo- or heterodimer (containing two subunits of similar size). Each subunit contains a covalently bound flavin. Enzymatically active as monomer. It depends on FAD as a cofactor.

Its subcellular location is the mitochondrion outer membrane. It carries out the reaction a secondary aliphatic amine + O2 + H2O = a primary amine + an aldehyde + H2O2. The enzyme catalyses a primary methyl amine + O2 + H2O = an aldehyde + H2O2 + NH4(+). It catalyses the reaction (R)-adrenaline + O2 + H2O = (R)-3,4-dihydroxymandelaldehyde + methylamine + H2O2. The catalysed reaction is dopamine + O2 + H2O = 3,4-dihydroxyphenylacetaldehyde + H2O2 + NH4(+). It carries out the reaction tyramine + O2 + H2O = (4-hydroxyphenyl)acetaldehyde + H2O2 + NH4(+). The enzyme catalyses (R)-noradrenaline + O2 + H2O = (R)-3,4-dihydroxymandelaldehyde + H2O2 + NH4(+). It catalyses the reaction serotonin + O2 + H2O = (5-hydroxyindol-3-yl)acetaldehyde + H2O2 + NH4(+). The catalysed reaction is kynuramine + O2 + H2O = 3-(2-aminophenyl)-3-oxopropanal + H2O2 + NH4(+). It carries out the reaction tryptamine + O2 + H2O = indole-3-acetaldehyde + H2O2 + NH4(+). The enzyme catalyses 2-phenylethylamine + O2 + H2O = 2-phenylacetaldehyde + H2O2 + NH4(+). In terms of biological role, catalyzes the oxidative deamination of primary and some secondary amine such as neurotransmitters, with concomitant reduction of oxygen to hydrogen peroxide and has important functions in the metabolism of neuroactive and vasoactive amines in the central nervous system and peripheral tissues. Preferentially oxidizes serotonin. Also catalyzes the oxidative deamination of kynuramine to 3-(2-aminophenyl)-3-oxopropanal that can spontaneously condense to 4-hydroxyquinoline. This Canis lupus familiaris (Dog) protein is Amine oxidase [flavin-containing] A.